Consider the following 336-residue polypeptide: CASP-like protein UU1 (336 aa).

Topologically, residues 1–170 (MGKGPGLDPS…PAMESNKDDN (170 aa)) are cytoplasmic. A helical transmembrane segment spans residues 171–191 (FFGAIVLSLRAAQIVFTVVGL). Over 192-222 (GVMGSLKHTSHGDYYYYYYDFSFTQVDSYIG) the chain is Extracellular. A helical transmembrane segment spans residues 223–243 (VLSLDVIVCLYAIVQLVLCFI). The Cytoplasmic segment spans residues 244 to 261 (QRSNQGKYLSSPTTVAAK). A helical membrane pass occupies residues 262 to 282 (LTFVFDQVLAYALVATAGAAA). Residues 283–307 (GSALEIRKGTSCSGTWTVICSKGEA) lie on the Extracellular side of the membrane. The helical transmembrane segment at 308–328 (SVAMSFFAFAFLAATAAVYSV) threads the bilayer. The Cytoplasmic segment spans residues 329-336 (RLLRITGR).

This sequence belongs to the Casparian strip membrane proteins (CASP) family. As to quaternary structure, homodimer and heterodimers.

It is found in the cell membrane. The sequence is that of CASP-like protein UU1 from Physcomitrium patens (Spreading-leaved earth moss).